We begin with the raw amino-acid sequence, 135 residues long: MKFIGLATLSLFALASADKFPVPDSITVAEGSSKCGDQAQLSCCNDVKYGGDTTVVQKGIAAGLLSDLLGAGSAAEGLGAFSGCSKLDISLLIGIEDILNQKCKQNIACCAKSGGSADGDLVGATLPCIALGSIL.

The N-terminal stretch at 1–17 (MKFIGLATLSLFALASA) is a signal peptide. 4 cysteine pairs are disulfide-bonded: C35/C109, C43/C103, C44/C84, and C110/C128.

This sequence belongs to the fungal hydrophobin family. As to quaternary structure, self-assembles to form functional amyloid fibrils called rodlets. Self-assembly into fibrillar rodlets occurs spontaneously at hydrophobic:hydrophilic interfaces and the rodlets further associate laterally to form amphipathic monolayers.

The protein resides in the secreted. The protein localises to the spore wall. Its function is as follows. Aerial growth, conidiation, and dispersal of filamentous fungi in the environment rely upon a capability of their secreting small amphipathic proteins called hydrophobins (HPBs) with low sequence identity. Class I can self-assemble into an outermost layer of rodlet bundles on aerial cell surfaces, conferring cellular hydrophobicity that supports fungal growth, development and dispersal; whereas Class II form highly ordered films at water-air interfaces through intermolecular interactions but contribute nothing to the rodlet structure. DewB is a class I hydrophobin that contributes to the hydrophobicity of the spore surface. The sequence is that of Class I hydrophobin dewB from Emericella nidulans (strain FGSC A4 / ATCC 38163 / CBS 112.46 / NRRL 194 / M139) (Aspergillus nidulans).